The primary structure comprises 115 residues: Replication initiation control protein YabA (115 aa).

Zn(2+)-binding residues include H90, C92, C106, and C109.

This sequence belongs to the YabA family. In terms of assembly, homotetramer. Interacts with both DnaA and DnaN, acting as a bridge between these two proteins. Requires Zn(2+) as cofactor.

It is found in the cytoplasm. It localises to the nucleoid. Involved in control of chromosome replication initiation. Inhibits the cooperative binding of DnaA to the oriC region, thus negatively regulating initiation of chromosome replication. Inhibits the ability of DnaA-ATP to form a helix on DNA; does not disassemble preformed DnaA-DNA helices. Decreases the residence time of DnaA on the chromosome at its binding sites (oriC, replication forks and promoter-binding sites). Tethers DnaA to the replication machinery via the DNA polymerase beta sliding clamp subunit (dnaN). Associates with oriC and other DnaA targets on the chromosome in a DnaA-dependent manner. This is Replication initiation control protein YabA from Staphylococcus aureus (strain bovine RF122 / ET3-1).